Here is a 604-residue protein sequence, read N- to C-terminus: Sulfite reductase [NADPH] flavoprotein alpha-component (604 aa).

A Flavodoxin-like domain is found at 66 to 204 (VTVLSASQTG…AANAWTDNIA (139 aa)). Residues 72-77 (SQTGNA), 119-122 (STQG), and 155-164 (LGDSSYPNFC) contribute to the FMN site. The 215-residue stretch at 239-453 (ADPFPAALLA…VERNDGFRLP (215 aa)) folds into the FAD-binding FR-type domain. FAD contacts are provided by residues Thr-327, Gln-361, 391-394 (RLYS), 409-411 (TVG), and 424-427 (GGAS). Residues 524–525 (SR), 530–534 (KIYVQ), and Asp-566 each bind NADP(+). Tyr-604 provides a ligand contact to FAD.

This sequence belongs to the NADPH-dependent sulphite reductase flavoprotein subunit CysJ family. The protein in the N-terminal section; belongs to the flavodoxin family. In the C-terminal section; belongs to the flavoprotein pyridine nucleotide cytochrome reductase family. As to quaternary structure, alpha(8)-beta(8). The alpha component is a flavoprotein, the beta component is a hemoprotein. FAD serves as cofactor. The cofactor is FMN.

It catalyses the reaction hydrogen sulfide + 3 NADP(+) + 3 H2O = sulfite + 3 NADPH + 4 H(+). The protein operates within sulfur metabolism; hydrogen sulfide biosynthesis; hydrogen sulfide from sulfite (NADPH route): step 1/1. Functionally, component of the sulfite reductase complex that catalyzes the 6-electron reduction of sulfite to sulfide. This is one of several activities required for the biosynthesis of L-cysteine from sulfate. The flavoprotein component catalyzes the electron flow from NADPH -&gt; FAD -&gt; FMN to the hemoprotein component. In Neisseria meningitidis serogroup C (strain 053442), this protein is Sulfite reductase [NADPH] flavoprotein alpha-component.